Here is a 157-residue protein sequence, read N- to C-terminus: Ribosome maturation factor RimP (157 aa).

It belongs to the RimP family.

It is found in the cytoplasm. Functionally, required for maturation of 30S ribosomal subunits. This chain is Ribosome maturation factor RimP, found in Streptococcus thermophilus (strain ATCC BAA-491 / LMD-9).